Consider the following 149-residue polypeptide: Large ribosomal subunit protein bL9 (149 aa).

Belongs to the bacterial ribosomal protein bL9 family.

Its function is as follows. Binds to the 23S rRNA. The protein is Large ribosomal subunit protein bL9 of Bacillus pumilus (strain SAFR-032).